Here is a 93-residue protein sequence, read N- to C-terminus: Large ribosomal subunit protein uL23 (93 aa).

Belongs to the universal ribosomal protein uL23 family. Part of the 50S ribosomal subunit. Contacts protein L29, and trigger factor when it is bound to the ribosome.

Functionally, one of the early assembly proteins it binds 23S rRNA. One of the proteins that surrounds the polypeptide exit tunnel on the outside of the ribosome. Forms the main docking site for trigger factor binding to the ribosome. This is Large ribosomal subunit protein uL23 from Campylobacter lari (strain RM2100 / D67 / ATCC BAA-1060).